The sequence spans 261 residues: THO complex subunit THP2 (261 aa).

In terms of assembly, component of the THO complex, which is composed of HPR1, MFT1, THO2 and THP2. Together with SUB2, TEX1 and YRA1, THO forms the transcription/export (TREX) complex. THO associates with DNA and RNA in vitro.

The protein localises to the nucleus. Its function is as follows. Component the THO subcomplex of the TREX complex, which operates in coupling transcription elongation to mRNA export. The THO complex is recruited to transcribed genes and moves along the gene with the elongating polymerase during transcription. THO is important for stabilizing nascent RNA in the RNA polymerase II elongation complex by preventing formation of DNA:RNA hybrids behind the elongating polymerase. It functions in cotranscriptional formation of an export-competent messenger ribonucleoprotein particle (mRNP) by facilitating the loading of ATP-dependent RNA helicase SUB2 and the mRNA export factor YRA1 along the nascent mRNA. The protein is THO complex subunit THP2 (THP2) of Saccharomyces cerevisiae (strain ATCC 204508 / S288c) (Baker's yeast).